The sequence spans 356 residues: MTDFIEQFGVWGGFGIAVLQILAFAVVLLISLAFLLLMDRKVWAAVQMRKGPNVVGAFGLLQSFADFFKFVFKEIVVPAGADRSLYLLAPLITLILAFVTWAVVPAAPGWVIADLNVGILYLFAMSSLGVYGIIIGGWASNSKYPFLGALRSAAQMVSYEVSIGFIIVTVLLFAGSMNLSEIIEMQGGGFWNWNVLSFHAWPMPMFLVMIPMAVIFFISALAETNRPPFDLPEAESELVAGYQVEYSSTPYLLFMVGEYLNIVLMCAMTAILFFGGWNDPFGLDVSGWPYLASHAWYFFWFAAKIVFFFFMFAMVKALVPRYRYDQLMRLGWKIFLPISLAAVALVGAAVVYGPQG.

Helical transmembrane passes span 16-36 (IAVL…AFLL), 52-72 (PNVV…KFVF), 85-105 (LYLL…AVVP), 117-137 (VGIL…IIGG), 163-183 (IGFI…SEII), 201-221 (WPMP…ISAL), 254-274 (FMVG…ILFF), 295-315 (AWYF…FAMV), and 334-354 (IFLP…VYGP).

It belongs to the complex I subunit 1 family. In terms of assembly, NDH-1 is composed of 14 different subunits. Subunits NuoA, H, J, K, L, M, N constitute the membrane sector of the complex.

The protein localises to the cell inner membrane. The enzyme catalyses a quinone + NADH + 5 H(+)(in) = a quinol + NAD(+) + 4 H(+)(out). Its function is as follows. NDH-1 shuttles electrons from NADH, via FMN and iron-sulfur (Fe-S) centers, to quinones in the respiratory chain. The immediate electron acceptor for the enzyme in this species is believed to be ubiquinone. Couples the redox reaction to proton translocation (for every two electrons transferred, four hydrogen ions are translocated across the cytoplasmic membrane), and thus conserves the redox energy in a proton gradient. This subunit may bind ubiquinone. The sequence is that of NADH-quinone oxidoreductase subunit H from Maricaulis maris (strain MCS10) (Caulobacter maris).